Reading from the N-terminus, the 142-residue chain is Hemoglobin subunit alpha-2 (142 aa).

One can recognise a Globin domain in the interval 2-142; the sequence is LLSADDKKHI…VSTVLTSKYR (141 aa). Histidine 59 is a binding site for O2. Histidine 88 contributes to the heme b binding site.

Belongs to the globin family. Heterotetramer of two alpha chains and two beta chains. In terms of tissue distribution, red blood cells.

In terms of biological role, involved in oxygen transport from the lung to the various peripheral tissues. In Xenopus laevis (African clawed frog), this protein is Hemoglobin subunit alpha-2 (hba2).